We begin with the raw amino-acid sequence, 328 residues long: GMP reductase (328 aa).

The active-site Thioimidate intermediate is the Cys-176. Residue 205 to 228 participates in NADP(+) binding; sequence IIADGGIRTHGDIAKSIRFGASMV.

This sequence belongs to the IMPDH/GMPR family. GuaC type 2 subfamily.

It carries out the reaction IMP + NH4(+) + NADP(+) = GMP + NADPH + 2 H(+). Functionally, catalyzes the irreversible NADPH-dependent deamination of GMP to IMP. It functions in the conversion of nucleobase, nucleoside and nucleotide derivatives of G to A nucleotides, and in maintaining the intracellular balance of A and G nucleotides. The chain is GMP reductase from Streptococcus pneumoniae (strain Hungary19A-6).